Here is a 196-residue protein sequence, read N- to C-terminus: Agamous-like MADS-box protein AGL31 (196 aa).

Residues 1–61 form the MADS-box domain; sequence MGRKKVEIKR…GKLYKSASGD (61 aa). Residues 80–170 form the K-box domain; the sequence is ALDLAEKTRN…ASQVGKKTFL (91 aa).

In terms of tissue distribution, expressed in most plant tissues, roots, seedlings, leaves, stems, inflorescences, pollen, siliques and flowers.

The protein localises to the nucleus. In terms of biological role, probable transcription factor that prevents vernalization by short periods of cold. Acts as a floral repressor. This Arabidopsis thaliana (Mouse-ear cress) protein is Agamous-like MADS-box protein AGL31 (AGL31).